The primary structure comprises 173 residues: Helix-loop-helix protein lin-22 (173 aa).

The interval 21–34 is basic motif; sequence KKIKNKPLMEKKRR. The bHLH domain occupies 21-78; that stretch reads KKIKNKPLMEKKRRARINKSLSQLKQILIQDEHKNSIQHSKWEKADILEMAVEYLQQL. The segment at 35–78 is helix-loop-helix motif; sequence ARINKSLSQLKQILIQDEHKNSIQHSKWEKADILEMAVEYLQQL. The segment covering 83-95 has biased composition (low complexity); that stretch reads PCSLSPSTSSIST. The segment at 83–102 is disordered; it reads PCSLSPSTSSISTPPTPKEE.

As to expression, expressed mostly in the seam (stem) cells and hypodermis (hyp7), but also to a lesser extent in the intestine.

The protein localises to the nucleus. Functionally, probable transcription factor. During development, required for cell fate specification, probably by promoting or repressing expression of genes involved in specific cell fate. Involved in specifying lineages derived from the epidermal stem cells of the lateral ectoderm, known as seam cells. Modulates symmetric divisions of seam cells, perhaps in concert with the Wnt signaling pathway. May repress expression of homeobox genes mab-5, egl-5 and lin-39. The chain is Helix-loop-helix protein lin-22 from Caenorhabditis elegans.